The sequence spans 479 residues: Polyadenylate-binding protein-interacting protein 1 (479 aa).

The tract at residues 1-114 (MSDGFDRAPG…PQQNSESAMA (114 aa)) is disordered. S2 is modified (N-acetylalanine). Residues 11 to 33 (AGRGRSRGLGRGGGGPEGGGFPN) show a composition bias toward gly residues. R21 carries the post-translational modification Omega-N-methylarginine. The segment covering 45-69 (PPQPKAPGFLQPPPLRQPRTTPPPG) has biased composition (pro residues). A compositionally biased stretch (polar residues) spans 98–111 (PSSQDKIPQQNSES). The PABPC1-interacting motif-2 (PAM2) stretch occupies residues 116–143 (PQVVVAPVLMSKLSVNAPEFYPSGYSSS). The interval 157–375 (TLSEYVQDFL…LLKLVELRSS (219 aa)) is PAIP1 middle domain (PAIP1M). The MIF4G domain maps to 159–376 (SEYVQDFLNH…LKLVELRSSN (218 aa)). The tract at residues 435–455 (DYEENGTDLSGAGDPYLDDID) is disordered. Positions 440–479 (GTDLSGAGDPYLDDIDDEMDPEIEEAYEKFCLESERKRKQ) are PABPC1-interacting motif-1 (PAM1).

Interacts with the RRM1-RRM2 and C-terminus regions of PABPC1 in a 1:1 stoichiometry. Interacts with EIF4A. In terms of assembly, (Microbial infection) Interacts (via PAIP1M) with human SARS coronaviruses SARS-COV and SARS-COV-2 NSP3 protein (via SARS-unique domain); the interaction increases binding affinity with PABPC1.

The protein resides in the cytoplasm. Acts as a coactivator in the regulation of translation initiation of poly(A)-containing mRNAs. Its stimulatory activity on translation is mediated via its action on PABPC1. Competes with PAIP2 for binding to PABPC1. Its association with EIF4A and PABPC1 may potentiate contacts between mRNA termini. May also be involved in translationally coupled mRNA turnover. Implicated with other RNA-binding proteins in the cytoplasmic deadenylation/translational and decay interplay of the FOS mRNA mediated by the major coding-region determinant of instability (mCRD) domain. In terms of biological role, (Microbial infection) Upon interaction with SARS coronavirus SARS-CoV NSP3 protein, plays an important role in viral protein synthesis. The sequence is that of Polyadenylate-binding protein-interacting protein 1 from Homo sapiens (Human).